The primary structure comprises 175 residues: Ribosome maturation factor RimM (175 aa).

The PRC barrel domain maps to Glu-97–Leu-169.

The protein belongs to the RimM family. As to quaternary structure, binds ribosomal protein uS19.

The protein localises to the cytoplasm. An accessory protein needed during the final step in the assembly of 30S ribosomal subunit, possibly for assembly of the head region. Essential for efficient processing of 16S rRNA. May be needed both before and after RbfA during the maturation of 16S rRNA. It has affinity for free ribosomal 30S subunits but not for 70S ribosomes. The chain is Ribosome maturation factor RimM from Christiangramia forsetii (strain DSM 17595 / CGMCC 1.15422 / KT0803) (Gramella forsetii).